Consider the following 1888-residue polypeptide: MSFNQSRSDKNEGYTQYRKSGRSNNFNPQRGSSGTHSKPGGAGGSAPTSSIASNRSFKKTNNAQGGQSRGGLPAVNSTDSSNAPNPRGVQNGAVAKPPEGPHSQRSTRDVPKAPTSQSAPLSSDGPAPTTPAKGTGDQPKEFAFQFGSISPGFMNGMQLPVRTSSAPPNLDEQKRDQARHESFRPVPPMPIPLAPKPQTQRKDTGAGDQPNVGQQLQQKDTGIINQPNTGDAHTVQKAKKDMQASPNHPTNQTQKPTTPMSGISMTMPYHPPQVPVPFGGPNQQMQSQGLTPTSLHMSIPVPLQIGSSPQVQQPMFVPGLHPHPMQPQGIIHQGQGLGFATQIGSQLPPQLSNLGMNVTSQYPQQQGGKFGGPRKSAVRITDPKTHEELIFDNKQSNAYADTGTSGPRPPYNLPSQTQPLPYAPSHAMNYYPNSYNPNPLYFASPSSLPLPSGQSAPNSQPHRFNYPVSQGSQNVPYIDMHVKKPSGGPMHGISDPPNREHTRDTHTFQPPAPSGTVHVTIKMPTDPTGGKGSDTLPNKLPTTEEGKSQKPSSPSVDLIPPSQRAVDTTSESSLHDSKLGREPSGIKSSPVISKQFTDGPPMVSLESQDSSSVQSSLTASSEESELAVAHSEVRRENLLGSDLHKDHQKKTSKKGYAQSLQHQISGQASSALGVPCQVQDTTSPLVSEAVEAKSLIIPAVVGGKSVSVSAVTSDPLESKDAGLVSVAHSSSPENPGLGNVKNLDLISDDNQDTSSKEKNSEPVVLKIEEQGQATFSEPPVDLKNSENVLDHDVSKSVEVAEKTERNLIVSSATVSNEVLTSETAQRAVDEPVSCNAEADVSASVSSSSTVPENSQDDKLVVDSSGRYDNMSSNEVLKNVVKSDQPSEPALNPGLSEGKNDGEVLDTVGTCANSSQGVSGTKDKSVVETSRVKGTTGKAKKRLKAILQMADAAGTTSDLYNAYKRPEEKKETVAHSESIERTESRSSSVDTEQESNEAIKEDAGALSKAEPDDWEDAADIATPDLESANGDGVGTSMLDSGDRTGDMAKKYSRDFLLKFAEQFLDLPHNFEVTSDIESLMSTHTNVSHHHDRDPYPSPGRVDRPSSGGSRLDRRGSNLVDDDRWSKLPGPFAPGQDPRLDLAYGATAGFRPGQGPNFGVLRNPRAQAPVQYAGGILAGPMQSMGPQGGLQRNNSDADRWQRATNFQKGLIPSPLTPLQTMHKAKKKYEVGKVSDEEETKQRQLKAILNKLTPQNFEKLFEQVKAVNIDNGRTLTGVISQIFDKALMEPTFCEMYANFCFHLAGELPDLSEDNEKITFKRLLLNKCQEEFERGEREQEEANKVEEEGEVKQSEEEREEKRIKARRRMLGNIRLIGELYKKKMLTERIMHECIKKLLGEYQNPDEEDVEALCKLMSTIGEMIDHPRAKDYMDSYFEIMTMLSNNMKLSSRVRFMLKDAIDLRKNKWQQRRKVEGPKKIEEVHRDAAQERQAQTGRFGRGPSINSSARRGGPPMDYGPRGSVVSSPGNQMGGFRAFLHQPRGYGGNQDARQDERQSYEARTLSVTSQRAGGDESITLGPQGGLARGMSIRGPQPSSAAPADMSPLPGDLRSAPIASLNGYSSASERATLTSKEDLISRHMPERFAGPTSMDHISSPERYSNYGNKDLRHSGRSFDRSRPISPATPPGPALTPSLPSEKVLSEDRLQQLSLTAIKEFYSARDEKEVALCIKELNSPAFHPTMISLWVTDVFERTNLERDLLAKLVVNLSRPNNGTLNQAHLVKGFEAVLGNLEDSVNDAPRAPEYLGQILGKVITESMVSLREVADLICQGGEVPGNLLQSGLGADVLGNILKTIKTEKGEGFLTDLRTNSNLRLETFLPPDPVKSRVLEEFI.

Disordered stretches follow at residues 1-259, 391-420, 449-662, 726-761, 838-903, 961-1042, 1083-1138, 1331-1356, 1462-1605, and 1639-1691; these read MSFN…PTTP, FDNKQSNAYADTGTSGPRPPYNLPSQTQPL, PLPS…SLQH, VAHSSSPENPGLGNVKNLDLISDDNQDTSSKEKNSE, ADVS…DGEV, AYKR…SGDR, TNVS…DPRL, GEREQEEANKVEEEGEVKQSEEEREE, KWQQ…PGDL, and RFAG…PSLP. 2 stretches are compositionally biased toward polar residues: residues 13–36 and 75–84; these read GYTQYRKSGRSNNFNPQRGSSGTH and VNSTDSSNAP. The segment covering 171–183 has biased composition (basic and acidic residues); the sequence is DEQKRDQARHESF. Residues 185–195 are compositionally biased toward pro residues; it reads PVPPMPIPLAP. Composition is skewed to polar residues over residues 211 to 231, 244 to 259, 393 to 405, and 458 to 475; these read NVGQQLQQKDTGIINQPNTGD, ASPNHPTNQTQKPTTP, NKQSNAYADTGTS, and NSQPHRFNYPVSQGSQNV. Residues 497–506 show a composition bias toward basic and acidic residues; the sequence is PNREHTRDTH. The span at 586 to 596 shows a compositional bias: polar residues; the sequence is IKSSPVISKQF. Positions 603–630 are enriched in low complexity; that stretch reads VSLESQDSSSVQSSLTASSEESELAVAH. Positions 631-645 are enriched in basic and acidic residues; sequence SEVRRENLLGSDLHK. A compositionally biased stretch (low complexity) spans 840-850; it reads VSASVSSSSTV. Positions 869-885 are enriched in polar residues; the sequence is NMSSNEVLKNVVKSDQP. The span at 963–983 shows a compositional bias: basic and acidic residues; that stretch reads KRPEEKKETVAHSESIERTES. Residues 1048–1093 form an EIF4E-binding region; sequence KKYSRDFLLKFAEQFLDLPHNFEVTSDIESLMSTHTNVSHHHDRDP. The span at 1109–1124 shows a compositional bias: basic and acidic residues; it reads RLDRRGSNLVDDDRWS. Residues 1239-1462 form the MIF4G domain; it reads QRQLKAILNK…KDAIDLRKNK (224 aa). Basic and acidic residues-rich tracts occupy residues 1467-1484 and 1661-1674; these read RKVEGPKKIEEVHRDAAQ and KDLRHSGRSFDRSR. The MI domain maps to 1700–1824; that stretch reads RLQQLSLTAI…SLREVADLIC (125 aa).

The protein belongs to the eukaryotic initiation factor 4G family. EIF4F is a multi-subunit complex, the composition of which varies with external and internal environmental conditions. It is composed of at least EIF4A, EIF4E and EIF4G. Interacts directly with eIF4E. In higher plants two isoforms of EIF4F have been identified, named isoform EIF4F and isoform EIF(iso)4F. Isoform EIF4F has subunits p220 and p26, whereas isoform EIF(iso)4F has subunits p82 and p28.

Component of the protein complex eIF4F, which is involved in the recognition of the mRNA cap, ATP-dependent unwinding of 5'-terminal secondary structure and recruitment of mRNA to the ribosome. This chain is Eukaryotic translation initiation factor 4G, found in Cucumis melo (Muskmelon).